Consider the following 305-residue polypeptide: Oxygen-dependent coproporphyrinogen-III oxidase (305 aa).

Ser-92 serves as a coordination point for substrate. 2 residues coordinate a divalent metal cation: His-96 and His-106. His-106 (proton donor) is an active-site residue. Residue 108–110 (NVR) participates in substrate binding. Residues His-145 and His-175 each contribute to the a divalent metal cation site. The important for dimerization stretch occupies residues 239-274 (YVEFNLLFDRGTLFGLQSGGRAESILISLPPLVRWE). 257–259 (GGR) is a substrate binding site.

Belongs to the aerobic coproporphyrinogen-III oxidase family. Homodimer. Requires a divalent metal cation as cofactor.

Its subcellular location is the cytoplasm. The catalysed reaction is coproporphyrinogen III + O2 + 2 H(+) = protoporphyrinogen IX + 2 CO2 + 2 H2O. It functions in the pathway porphyrin-containing compound metabolism; protoporphyrin-IX biosynthesis; protoporphyrinogen-IX from coproporphyrinogen-III (O2 route): step 1/1. Involved in the heme biosynthesis. Catalyzes the aerobic oxidative decarboxylation of propionate groups of rings A and B of coproporphyrinogen-III to yield the vinyl groups in protoporphyrinogen-IX. This Xylella fastidiosa (strain M12) protein is Oxygen-dependent coproporphyrinogen-III oxidase.